Here is a 171-residue protein sequence, read N- to C-terminus: Adenine phosphoribosyltransferase (171 aa).

This sequence belongs to the purine/pyrimidine phosphoribosyltransferase family. Homodimer.

It localises to the cytoplasm. The catalysed reaction is AMP + diphosphate = 5-phospho-alpha-D-ribose 1-diphosphate + adenine. It functions in the pathway purine metabolism; AMP biosynthesis via salvage pathway; AMP from adenine: step 1/1. Its function is as follows. Catalyzes a salvage reaction resulting in the formation of AMP, that is energically less costly than de novo synthesis. The chain is Adenine phosphoribosyltransferase from Rhodospirillum rubrum (strain ATCC 11170 / ATH 1.1.1 / DSM 467 / LMG 4362 / NCIMB 8255 / S1).